The following is a 440-amino-acid chain: MPKLVTWMNNQRVGELTKLANGAHTFKYAPEWLASRYARPLSLSLPLQRGNITSDAVFNFFDNLLPDSPIVRDRIVKRYHAKSRQPFDLLSEIGRDSVGAVTLIPEDETVTHPIMAWEKLTEARLEEVLTAYKADIPLGMIREENDFRISVAGAQEKTALLRIGNDWCIPKGITPTTHIIKLPIGEIRQPNATLDLSQSVDNEYYCLLLAKELGLNVPDAEIIKAGNVRALAVERFDRRWNAERTVLLRLPQEDMCQTFGLPSSVKYESDGGPGIARIMAFLMGSSEALKDRYDFMKFQVFQWLIGATDGHAKNFSVFIQAGGSYRLTPFYDIISAFPVLGGTGIHISDLKLAMGLNASKGKKTAIDKIYPRHFLATAKVLRFPEVQMHEILSDFARMIPAALDNVKTSLPTDFPENVVTAVESNVLRLHGRLSREYGSK.

S150 bears the Phosphoserine; by autocatalysis mark. ATP contacts are provided by residues 152–157 (AGAQEK), K181, and 234–236 (ERF). The active-site Proton acceptor is D309. ATP is bound by residues 311-314 (HAKN) and 331-332 (YD). Residues 379–382 (KVLR) mediate DNA binding.

The protein belongs to the HipA Ser/Thr kinase family. In terms of assembly, forms a HipA(2)HipB(2) heterotetramer which can interact with a single operator on DNA. When 2 operators are present each HipB dimer contacts 1 HipA molecule, which are brought together by the DNA bend and dimerize, blocking the HipA active site and inactivating its toxic activity. Mutations present in allele hipA7 (G22S and D291A) decrease the affinity of HipA for HipB. Autophosphorylates intermolecularly on Ser-150; phosphorylated form not seen to bind ATP and no longer has kinase activity.

The enzyme catalyses L-seryl-[protein] + ATP = O-phospho-L-seryl-[protein] + ADP + H(+). It catalyses the reaction L-threonyl-[protein] + ATP = O-phospho-L-threonyl-[protein] + ADP + H(+). Once phosphorylated no longer has kinase activity. Toxic component of a type II toxin-antitoxin (TA) system, first identified by mutations that increase production of persister cells, a fraction of cells that are phenotypic variants not killed by antibiotics, which lead to multidrug tolerance. Persistence may be ultimately due to global remodeling of the persister cell's ribosomes. Phosphorylates Glu-tRNA-ligase (AC P04805, gltX, on 'Ser-239') in vivo. Phosphorylation of GltX prevents it from being charged, leading to an increase in uncharged tRNA(Glu). This induces amino acid starvation and the stringent response via RelA/SpoT and increased (p)ppGpp levels, which inhibits replication, transcription, translation and cell wall synthesis, reducing growth and leading to persistence and multidrug resistance. Once the level of HipA exceeds a threshold cells become dormant, and the length of dormancy is determined by how much HipA levels exceed the threshold. The hipA7 mutation (a double G22S D291A mutation) leads to increased generation of persister cells (cells that survive antibiotic treatment) probably by entering into a dormant state, as well as cold-sensitivity. Wild-type cells produce persisters at a frequency of 10(-6) to 10(-5) whereas hipA7 cells produce about 100-fold more persisters. hipA7 decreases the affinity for antitoxin HipB, leading to increased HipA levels and persistence; depending on the protein level, can be toxic enough to reduce cell growth or even kill cells. Generation of persister cells requires (p)ppGpp as cells lacking relA or relA/spoT generate fewer or no persister cells respectively compared to hipA7. The toxic effect of HipA is neutralized by its cognate antitoxin HipB. Also neutralized by overexpression of gltX. With HipB acts as a corepressor for transcription of the hipBA promoter; binding of HipA-HipB to DNA induces a 70 degree bend. This brings together and dimerizes 2 HipA molecules, which distorts the promoter region, preventing sigma-factor binding; additionally HipA and HipB would physically prevent RNA core polymerase from contacting the -35 promoter box. May play a role in biofilm formation. The sequence is that of Serine/threonine-protein kinase toxin HipA (hipA) from Escherichia coli (strain K12).